The chain runs to 213 residues: Large ribosomal subunit protein uL1 (213 aa).

Belongs to the universal ribosomal protein uL1 family. In terms of assembly, part of the 50S ribosomal subunit.

Functionally, probably involved in E site tRNA release. Binds directly to 23S rRNA. Protein L1 is also a translational repressor protein, it controls the translation of its operon by binding to its mRNA. This Methanothermococcus thermolithotrophicus (Methanococcus thermolithotrophicus) protein is Large ribosomal subunit protein uL1.